The chain runs to 119 residues: Ribonuclease P protein component (119 aa).

Belongs to the RnpA family. In terms of assembly, consists of a catalytic RNA component (M1 or rnpB) and a protein subunit.

The enzyme catalyses Endonucleolytic cleavage of RNA, removing 5'-extranucleotides from tRNA precursor.. In terms of biological role, RNaseP catalyzes the removal of the 5'-leader sequence from pre-tRNA to produce the mature 5'-terminus. It can also cleave other RNA substrates such as 4.5S RNA. The protein component plays an auxiliary but essential role in vivo by binding to the 5'-leader sequence and broadening the substrate specificity of the ribozyme. This is Ribonuclease P protein component from Haemophilus influenzae (strain 86-028NP).